Here is a 425-residue protein sequence, read N- to C-terminus: L-cysteine:1D-myo-inositol 2-amino-2-deoxy-alpha-D-glucopyranoside ligase (425 aa).

Zn(2+) is bound at residue Cys-43. Residues 43 to 46, Ser-58, and 81 to 83 contribute to the L-cysteinyl-5'-AMP site; these read CGIT and NVT. The 'HIGH' region signature appears at 45-55; the sequence is ITPYDATHMGH. The 'ERGGDP' region signature appears at 199-204; it reads ERGGDP. Trp-240 is an L-cysteinyl-5'-AMP binding site. Residue Cys-244 coordinates Zn(2+). 262-264 serves as a coordination point for L-cysteinyl-5'-AMP; sequence GSD. His-269 is a Zn(2+) binding site. Val-295 lines the L-cysteinyl-5'-AMP pocket. Residues 301–305 carry the 'KMSKS' region motif; the sequence is KMSKS.

The protein belongs to the class-I aminoacyl-tRNA synthetase family. MshC subfamily. In terms of assembly, monomer. Requires Zn(2+) as cofactor.

It catalyses the reaction 1D-myo-inositol 2-amino-2-deoxy-alpha-D-glucopyranoside + L-cysteine + ATP = 1D-myo-inositol 2-(L-cysteinylamino)-2-deoxy-alpha-D-glucopyranoside + AMP + diphosphate + H(+). Functionally, catalyzes the ATP-dependent condensation of GlcN-Ins and L-cysteine to form L-Cys-GlcN-Ins. The chain is L-cysteine:1D-myo-inositol 2-amino-2-deoxy-alpha-D-glucopyranoside ligase from Paenarthrobacter aurescens (strain TC1).